Consider the following 255-residue polypeptide: Thiazole synthase (255 aa).

Lys96 acts as the Schiff-base intermediate with DXP in catalysis. Residues Gly157, 183-184 (AG), and 205-206 (NS) each bind 1-deoxy-D-xylulose 5-phosphate.

The protein belongs to the ThiG family. In terms of assembly, homotetramer. Forms heterodimers with either ThiH or ThiS.

It is found in the cytoplasm. It catalyses the reaction [ThiS sulfur-carrier protein]-C-terminal-Gly-aminoethanethioate + 2-iminoacetate + 1-deoxy-D-xylulose 5-phosphate = [ThiS sulfur-carrier protein]-C-terminal Gly-Gly + 2-[(2R,5Z)-2-carboxy-4-methylthiazol-5(2H)-ylidene]ethyl phosphate + 2 H2O + H(+). It participates in cofactor biosynthesis; thiamine diphosphate biosynthesis. In terms of biological role, catalyzes the rearrangement of 1-deoxy-D-xylulose 5-phosphate (DXP) to produce the thiazole phosphate moiety of thiamine. Sulfur is provided by the thiocarboxylate moiety of the carrier protein ThiS. In vitro, sulfur can be provided by H(2)S. The sequence is that of Thiazole synthase from Exiguobacterium sibiricum (strain DSM 17290 / CCUG 55495 / CIP 109462 / JCM 13490 / 255-15).